The primary structure comprises 201 residues: UPF0301 protein BP0319 (201 aa).

The protein belongs to the UPF0301 (AlgH) family.

This is UPF0301 protein BP0319 from Bordetella pertussis (strain Tohama I / ATCC BAA-589 / NCTC 13251).